Reading from the N-terminus, the 156-residue chain is Ribonuclease pancreatic (156 aa).

The N-terminal stretch at 1–28 (MALEKSLVLLPLFVLMLLVLGWVQPSLG) is a signal peptide. Substrate is bound by residues lysine 35 and arginine 38. Histidine 40 serves as the catalytic Proton acceptor. Asparagine 50 and asparagine 62 each carry an N-linked (GlcNAc...) asparagine glycan. Intrachain disulfides connect cysteine 54/cysteine 112, cysteine 68/cysteine 123, cysteine 86/cysteine 138, and cysteine 93/cysteine 100. Residues 69 to 73 (KPVNT) and lysine 94 each bind substrate. Asparagine 104 is a glycosylation site (N-linked (GlcNAc...) asparagine). Arginine 113 provides a ligand contact to substrate. An N-linked (GlcNAc...) asparagine glycan is attached at asparagine 116. Residue histidine 147 is the Proton donor of the active site.

It belongs to the pancreatic ribonuclease family. In terms of assembly, monomer. Interacts with and forms tight 1:1 complexes with RNH1. Dimerization of two such complexes may occur. Interaction with RNH1 inhibits this protein.

It is found in the secreted. The catalysed reaction is an [RNA] containing cytidine + H2O = an [RNA]-3'-cytidine-3'-phosphate + a 5'-hydroxy-ribonucleotide-3'-[RNA].. It catalyses the reaction an [RNA] containing uridine + H2O = an [RNA]-3'-uridine-3'-phosphate + a 5'-hydroxy-ribonucleotide-3'-[RNA].. In terms of biological role, endonuclease that catalyzes the cleavage of RNA on the 3' side of pyrimidine nucleotides. Acts on single-stranded and double-stranded RNA. The chain is Ribonuclease pancreatic (RNASE1) from Nomascus leucogenys (Northern white-cheeked gibbon).